The sequence spans 64 residues: Large ribosomal subunit protein bL35 (64 aa).

A compositionally biased stretch (basic residues) spans 1–17 (MKQKTHSGIKKRIKKTG). Residues 1–64 (MKQKTHSGIK…KRVNRLLGEG (64 aa)) are disordered. The segment covering 21-33 (LRREQANRRHLLE) has biased composition (basic and acidic residues).

Belongs to the bacterial ribosomal protein bL35 family.

The polypeptide is Large ribosomal subunit protein bL35 (Corynebacterium kroppenstedtii (strain DSM 44385 / JCM 11950 / CIP 105744 / CCUG 35717)).